Consider the following 117-residue polypeptide: Large ribosomal subunit protein uL18 (117 aa).

Belongs to the universal ribosomal protein uL18 family. As to quaternary structure, part of the 50S ribosomal subunit; part of the 5S rRNA/L5/L18/L25 subcomplex. Contacts the 5S and 23S rRNAs.

Functionally, this is one of the proteins that bind and probably mediate the attachment of the 5S RNA into the large ribosomal subunit, where it forms part of the central protuberance. This chain is Large ribosomal subunit protein uL18, found in Francisella tularensis subsp. novicida (strain U112).